The sequence spans 330 residues: tRNA U34 carboxymethyltransferase (330 aa).

Carboxy-S-adenosyl-L-methionine is bound by residues Lys-91, Trp-105, Lys-110, Gly-130, Asp-152–Ser-154, Ile-181–Glu-182, Met-196, Tyr-200, and Arg-315.

Belongs to the class I-like SAM-binding methyltransferase superfamily. CmoB family. In terms of assembly, homotetramer.

It carries out the reaction carboxy-S-adenosyl-L-methionine + 5-hydroxyuridine(34) in tRNA = 5-carboxymethoxyuridine(34) in tRNA + S-adenosyl-L-homocysteine + H(+). Functionally, catalyzes carboxymethyl transfer from carboxy-S-adenosyl-L-methionine (Cx-SAM) to 5-hydroxyuridine (ho5U) to form 5-carboxymethoxyuridine (cmo5U) at position 34 in tRNAs. The polypeptide is tRNA U34 carboxymethyltransferase (Shewanella piezotolerans (strain WP3 / JCM 13877)).